A 655-amino-acid chain; its full sequence is Very long-chain specific acyl-CoA dehydrogenase, mitochondrial (655 aa).

The transit peptide at 1-40 (MQAARMAASLGRQLLRLGGGSSRLTALLGQPRPGPARRPY) directs the protein to the mitochondrion. Residues 23-42 (RLTALLGQPRPGPARRPYAG) are disordered. The interval 41 to 482 (AGGAAQLALD…ALQGCMDKGK (442 aa)) is catalytic. K51 bears the N6-acetyllysine mark. The residue at position 71 (K71) is an N6-acetyllysine; alternate. An N6-succinyllysine; alternate modification is found at K71. Residue K195 is modified to N6-succinyllysine. Residue 214 to 223 (FCLTEPSSGS) coordinates FAD. An S-nitrosocysteine modification is found at C237. K239 bears the N6-acetyllysine; alternate mark. An N6-succinyllysine; alternate modification is found at K239. 249-251 (WIS) serves as a coordination point for FAD. An N6-acetyllysine; alternate mark is found at K276 and K278. Residues K276 and K278 each carry the N6-succinyllysine; alternate modification. K298 carries the post-translational modification N6-acetyllysine. At K331 the chain carries N6-acetyllysine; alternate. At K331 the chain carries N6-succinyllysine; alternate. K372 carries the post-translational modification N6-succinyllysine. Residue 461–463 (FEG) coordinates substrate. The active-site Proton acceptor is the E462. 464–466 (TND) serves as a coordination point for FAD. K482 is modified (N6-acetyllysine; alternate). The residue at position 482 (K482) is an N6-succinyllysine; alternate. Residues 483–516 (ELSGLGSALKNPFGNAGLLLGEAGKQLRRRAGLG) form a membrane-anchoring region. Phosphoserine is present on residues S517 and S522. At K550 the chain carries N6-acetyllysine. K556 carries the N6-acetyllysine; alternate modification. An N6-succinyllysine; alternate modification is found at K556. Q562 contributes to the FAD binding site. An N6-succinyllysine modification is found at K639.

It belongs to the acyl-CoA dehydrogenase family. As to quaternary structure, homodimer. Homodimerizes after import into the mitochondrion. It depends on FAD as a cofactor. In terms of processing, S-nitrosylation at Cys-237 in liver improves catalytic efficiency. As to expression, predominantly expressed in heart and skeletal muscle (at protein level). Also detected in kidney and liver (at protein level).

It localises to the mitochondrion inner membrane. It catalyses the reaction a very-long-chain 2,3-saturated fatty acyl-CoA + oxidized [electron-transfer flavoprotein] + H(+) = a very-long-chain (2E)-enoyl-CoA + reduced [electron-transfer flavoprotein]. It carries out the reaction decanoyl-CoA + oxidized [electron-transfer flavoprotein] + H(+) = (2E)-decenoyl-CoA + reduced [electron-transfer flavoprotein]. The catalysed reaction is dodecanoyl-CoA + oxidized [electron-transfer flavoprotein] + H(+) = (2E)-dodecenoyl-CoA + reduced [electron-transfer flavoprotein]. The enzyme catalyses tetradecanoyl-CoA + oxidized [electron-transfer flavoprotein] + H(+) = (2E)-tetradecenoyl-CoA + reduced [electron-transfer flavoprotein]. It catalyses the reaction oxidized [electron-transfer flavoprotein] + hexadecanoyl-CoA + H(+) = (2E)-hexadecenoyl-CoA + reduced [electron-transfer flavoprotein]. It carries out the reaction octadecanoyl-CoA + oxidized [electron-transfer flavoprotein] + H(+) = (2E)-octadecenoyl-CoA + reduced [electron-transfer flavoprotein]. The catalysed reaction is eicosanoyl-CoA + oxidized [electron-transfer flavoprotein] + H(+) = (2E)-eicosenoyl-CoA + reduced [electron-transfer flavoprotein]. The enzyme catalyses docosanoyl-CoA + oxidized [electron-transfer flavoprotein] + H(+) = (2E)-docosenoyl-CoA + reduced [electron-transfer flavoprotein]. It catalyses the reaction tetracosanoyl-CoA + oxidized [electron-transfer flavoprotein] + H(+) = (2E)-tetracosenoyl-CoA + reduced [electron-transfer flavoprotein]. It carries out the reaction (9Z)-hexadecenoyl-CoA + oxidized [electron-transfer flavoprotein] + H(+) = (2E,9Z)-hexadecadienoyl-CoA + reduced [electron-transfer flavoprotein]. The catalysed reaction is oxidized [electron-transfer flavoprotein] + (9Z)-octadecenoyl-CoA + H(+) = (2E,9Z)-octadecadienoyl-CoA + reduced [electron-transfer flavoprotein]. It functions in the pathway lipid metabolism; mitochondrial fatty acid beta-oxidation. Functionally, very long-chain specific acyl-CoA dehydrogenase is one of the acyl-CoA dehydrogenases that catalyze the first step of mitochondrial fatty acid beta-oxidation, an aerobic process breaking down fatty acids into acetyl-CoA and allowing the production of energy from fats. The first step of fatty acid beta-oxidation consists in the removal of one hydrogen from C-2 and C-3 of the straight-chain fatty acyl-CoA thioester, resulting in the formation of trans-2-enoyl-CoA. Among the different mitochondrial acyl-CoA dehydrogenases, very long-chain specific acyl-CoA dehydrogenase acts specifically on acyl-CoAs with saturated 12 to 24 carbons long primary chains. This is Very long-chain specific acyl-CoA dehydrogenase, mitochondrial from Homo sapiens (Human).